The sequence spans 421 residues: UDP-N-acetylglucosamine 1-carboxyvinyltransferase (421 aa).

22–23 serves as a coordination point for phosphoenolpyruvate; that stretch reads KN. Residue R93 participates in UDP-N-acetyl-alpha-D-glucosamine binding. C117 (proton donor) is an active-site residue. Position 117 is a 2-(S-cysteinyl)pyruvic acid O-phosphothioketal (C117). UDP-N-acetyl-alpha-D-glucosamine contacts are provided by residues 122–126, D308, and I330; that span reads RPVDL.

Belongs to the EPSP synthase family. MurA subfamily.

The protein resides in the cytoplasm. The catalysed reaction is phosphoenolpyruvate + UDP-N-acetyl-alpha-D-glucosamine = UDP-N-acetyl-3-O-(1-carboxyvinyl)-alpha-D-glucosamine + phosphate. The protein operates within cell wall biogenesis; peptidoglycan biosynthesis. Functionally, cell wall formation. Adds enolpyruvyl to UDP-N-acetylglucosamine. The polypeptide is UDP-N-acetylglucosamine 1-carboxyvinyltransferase (Pseudomonas syringae pv. tomato (strain ATCC BAA-871 / DC3000)).